The following is a 403-amino-acid chain: Arginine biosynthesis bifunctional protein ArgJ (403 aa).

Thr151, Lys177, Thr188, Glu275, Asn398, and Ser403 together coordinate substrate. Thr188 (nucleophile) is an active-site residue.

The protein belongs to the ArgJ family. In terms of assembly, heterotetramer of two alpha and two beta chains.

It localises to the cytoplasm. The catalysed reaction is N(2)-acetyl-L-ornithine + L-glutamate = N-acetyl-L-glutamate + L-ornithine. It carries out the reaction L-glutamate + acetyl-CoA = N-acetyl-L-glutamate + CoA + H(+). It participates in amino-acid biosynthesis; L-arginine biosynthesis; L-ornithine and N-acetyl-L-glutamate from L-glutamate and N(2)-acetyl-L-ornithine (cyclic): step 1/1. The protein operates within amino-acid biosynthesis; L-arginine biosynthesis; N(2)-acetyl-L-ornithine from L-glutamate: step 1/4. Catalyzes two activities which are involved in the cyclic version of arginine biosynthesis: the synthesis of N-acetylglutamate from glutamate and acetyl-CoA as the acetyl donor, and of ornithine by transacetylation between N(2)-acetylornithine and glutamate. In Caulobacter vibrioides (strain ATCC 19089 / CIP 103742 / CB 15) (Caulobacter crescentus), this protein is Arginine biosynthesis bifunctional protein ArgJ.